Here is a 306-residue protein sequence, read N- to C-terminus: Tyrosine recombinase XerC (306 aa).

Residues 10 to 94 (ARCHSYLQQF…AVKQWGEFLL (85 aa)) form the Core-binding (CB) domain. One can recognise a Tyr recombinase domain in the interval 115–294 (PLPKNIDVDS…DFQHLAKVYD (180 aa)). Catalysis depends on residues R154, K178, H246, R249, and H272. Catalysis depends on Y281, which acts as the O-(3'-phospho-DNA)-tyrosine intermediate.

This sequence belongs to the 'phage' integrase family. XerC subfamily. In terms of assembly, forms a cyclic heterotetrameric complex composed of two molecules of XerC and two molecules of XerD.

The protein localises to the cytoplasm. Functionally, site-specific tyrosine recombinase, which acts by catalyzing the cutting and rejoining of the recombining DNA molecules. The XerC-XerD complex is essential to convert dimers of the bacterial chromosome into monomers to permit their segregation at cell division. It also contributes to the segregational stability of plasmids. The protein is Tyrosine recombinase XerC of Shewanella oneidensis (strain ATCC 700550 / JCM 31522 / CIP 106686 / LMG 19005 / NCIMB 14063 / MR-1).